The sequence spans 294 residues: Large ribosomal subunit protein uL2 (294 aa).

Disordered stretches follow at residues 1-37 and 228-294; these read MGIR…RPEK and GSVM…RAAQ. A compositionally biased stretch (basic and acidic residues) spans 23–37; the sequence is ELSRDENGKRPRPEK. Over residues 264 to 285 the composition is skewed to basic residues; the sequence is KTRKRNKPSNKFIVRGRRRGGR.

This sequence belongs to the universal ribosomal protein uL2 family. In terms of assembly, part of the 50S ribosomal subunit. Forms a bridge to the 30S subunit in the 70S ribosome.

Functionally, one of the primary rRNA binding proteins. Required for association of the 30S and 50S subunits to form the 70S ribosome, for tRNA binding and peptide bond formation. It has been suggested to have peptidyltransferase activity; this is somewhat controversial. Makes several contacts with the 16S rRNA in the 70S ribosome. The polypeptide is Large ribosomal subunit protein uL2 (Synechococcus sp. (strain JA-2-3B'a(2-13)) (Cyanobacteria bacterium Yellowstone B-Prime)).